A 473-amino-acid polypeptide reads, in one-letter code: Flavin-dependent L-tryptophan oxidase RebO (473 aa).

An N-terminal signal peptide occupies residues methionine 1 to alanine 21. Residues valine 15–alanine 16, glutamate 35–glycine 36, arginine 43, glycine 61–arginine 64, glutamate 444, and alanine 451–alanine 456 contribute to the FAD site.

This sequence belongs to the flavin monoamine oxidase family. RebO subfamily. Homodimer. FAD serves as cofactor.

It catalyses the reaction 7-chloro-L-tryptophan + O2 = 3-(7-chloroindol-3-yl)-2-iminopropanoate + H2O2. The enzyme catalyses L-tryptophan + O2 = 2-iminio-3-(indol-3-yl)propanoate + H2O2. Involved in the biosynthesis of the indolocarbazole antitumor agent rebeccamycin. It generates the imine form of 7-chloroindole 3-pyruvate (7Cl-IPA) from 7-chloro-L-tryptophan (7Cl-Trp), with concomitant two-electron reduction of O(2) to H(2)O(2). The enzyme is also active with L-tryptophan as substrate. This is Flavin-dependent L-tryptophan oxidase RebO (rebO) from Lentzea aerocolonigenes (Lechevalieria aerocolonigenes).